The sequence spans 214 residues: Cell division protein SepF (214 aa).

The tract at residues 23–70 is disordered; sequence YYDDRAPSRGFPRPRFDDGYGRYDGDDYDDPRREPADYPPPAGYRGGY. The segment covering 36 to 58 has biased composition (basic and acidic residues); the sequence is PRFDDGYGRYDGDDYDDPRREPA.

Belongs to the SepF family. As to quaternary structure, homodimer. Interacts with FtsZ.

The protein localises to the cytoplasm. In terms of biological role, cell division protein that is part of the divisome complex and is recruited early to the Z-ring. Probably stimulates Z-ring formation, perhaps through the cross-linking of FtsZ protofilaments. Its function overlaps with FtsA. This is Cell division protein SepF from Mycobacterium avium (strain 104).